A 496-amino-acid polypeptide reads, in one-letter code: Glycerol kinase (496 aa).

Thr11 contacts ADP. ATP-binding residues include Thr11, Ser12, and Ser13. Thr11 is a binding site for sn-glycerol 3-phosphate. An ADP-binding site is contributed by Arg15. Positions 81, 82, 133, and 242 each coordinate sn-glycerol 3-phosphate. The glycerol site is built by Arg81, Glu82, Tyr133, Asp242, and Gln243. ADP is bound by residues Thr264 and Gly307. ATP-binding residues include Thr264, Gly307, Gln311, and Gly412. Residues Gly412 and Asn416 each contribute to the ADP site.

This sequence belongs to the FGGY kinase family.

It catalyses the reaction glycerol + ATP = sn-glycerol 3-phosphate + ADP + H(+). It functions in the pathway polyol metabolism; glycerol degradation via glycerol kinase pathway; sn-glycerol 3-phosphate from glycerol: step 1/1. Its activity is regulated as follows. Inhibited by fructose 1,6-bisphosphate (FBP). In terms of biological role, key enzyme in the regulation of glycerol uptake and metabolism. Catalyzes the phosphorylation of glycerol to yield sn-glycerol 3-phosphate. The chain is Glycerol kinase from Albidiferax ferrireducens (strain ATCC BAA-621 / DSM 15236 / T118) (Rhodoferax ferrireducens).